Here is a 269-residue protein sequence, read N- to C-terminus: uncharacterized protein (269 aa).

Residue Gln15–His41 coordinates NADP(+). Residue Ser146 participates in substrate binding. Tyr159 serves as the catalytic Proton acceptor.

It belongs to the short-chain dehydrogenases/reductases (SDR) family.

This is an uncharacterized protein from Escherichia coli O6:H1 (strain CFT073 / ATCC 700928 / UPEC).